A 1309-amino-acid polypeptide reads, in one-letter code: Mediator of RNA polymerase II transcription subunit 33A (1309 aa).

The segment at 809 to 829 is disordered; the sequence is QTLNPVNSGTSSSSGAASEDS. Low complexity predominate over residues 816 to 826; that stretch reads SGTSSSSGAAS.

The protein belongs to the Mediator complex subunit 33 family. As to quaternary structure, component of the Mediator complex.

It localises to the nucleus. Component of the Mediator complex, a coactivator involved in the regulated transcription of nearly all RNA polymerase II-dependent genes. Mediator functions as a bridge to convey information from gene-specific regulatory proteins to the basal RNA polymerase II transcription machinery. The Mediator complex, having a compact conformation in its free form, is recruited to promoters by direct interactions with regulatory proteins and serves for the assembly of a functional preinitiation complex with RNA polymerase II and the general transcription factors. Involved in the repression of phenylpropanoid biosynthesis. May compete with MED33B for common binding partners or for occupancy in Mediator. This is Mediator of RNA polymerase II transcription subunit 33A (MED33A) from Arabidopsis thaliana (Mouse-ear cress).